A 434-amino-acid chain; its full sequence is Glutamyl-tRNA(Gln) amidotransferase subunit A (434 aa).

Catalysis depends on charge relay system residues Lys-57 and Ser-132. Ser-156 functions as the Acyl-ester intermediate in the catalytic mechanism.

The protein belongs to the amidase family. GatA subfamily. Heterotrimer of A, B and C subunits.

The catalysed reaction is L-glutamyl-tRNA(Gln) + L-glutamine + ATP + H2O = L-glutaminyl-tRNA(Gln) + L-glutamate + ADP + phosphate + H(+). Allows the formation of correctly charged Gln-tRNA(Gln) through the transamidation of misacylated Glu-tRNA(Gln) in organisms which lack glutaminyl-tRNA synthetase. The reaction takes place in the presence of glutamine and ATP through an activated gamma-phospho-Glu-tRNA(Gln). This Methanocaldococcus jannaschii (strain ATCC 43067 / DSM 2661 / JAL-1 / JCM 10045 / NBRC 100440) (Methanococcus jannaschii) protein is Glutamyl-tRNA(Gln) amidotransferase subunit A (gatA).